The chain runs to 391 residues: MRYLTAGESHGRALVTIVEGLPAGVPVDLAAIDRDLARRQSGYGRGGRMKIEQDRVQVLSGIRHGKTLGSPVALLVENRDWLNWTEVMSPAPLEAYTDPRAAQKVRTRPRPGHADLAGALKYDHADLRNVLERASARETAARVAAGSLAKQYLAPFGIRVAGYVRSIGPVEAQPPAGLDLDGIVARAEASPVRCPDPAASARMVEEIDAAKRDGDSLGGVVEVVAAGLPPGLGSHVHWDRKLDGALGAALLSIQAAKGVEIGDGFLGARRRGSEVHDEIGWSPDRGYFRYTNRAGGLEGGMTNGMDLVVRVAFKPIATLYKPLRSVEIDTHVEAAAGIERSDVCAVPAAAVIAECVTAFELARFVAEKFGGDSLEEALRNFRGYLEQIARR.

NADP(+)-binding residues include R39 and R45. FMN-binding positions include 133 to 135, 254 to 255, G299, 314 to 318, and R340; these read RAS, QA, and KPIAT.

This sequence belongs to the chorismate synthase family. Homotetramer. Requires FMNH2 as cofactor.

It carries out the reaction 5-O-(1-carboxyvinyl)-3-phosphoshikimate = chorismate + phosphate. It participates in metabolic intermediate biosynthesis; chorismate biosynthesis; chorismate from D-erythrose 4-phosphate and phosphoenolpyruvate: step 7/7. In terms of biological role, catalyzes the anti-1,4-elimination of the C-3 phosphate and the C-6 proR hydrogen from 5-enolpyruvylshikimate-3-phosphate (EPSP) to yield chorismate, which is the branch point compound that serves as the starting substrate for the three terminal pathways of aromatic amino acid biosynthesis. This reaction introduces a second double bond into the aromatic ring system. The sequence is that of Chorismate synthase from Symbiobacterium thermophilum (strain DSM 24528 / JCM 14929 / IAM 14863 / T).